Reading from the N-terminus, the 257-residue chain is MYSVCDVVRDAVAQSHLCACPNDKLPQCKGVTKAPPECSVFHLAKLQDTKFKWKYTLDPLKAQKLDQINKDIEKDAITLKLIYGTELSPEDVEWWKMQRCLINKNTGAKGGQFAHKYLERQDLELLGYSPTSLIGGDLMFTALPDKVLRTIPVVWDRFLNPAMMIFFLIILLCIILGIFYVLVRNTLRRKQKSKQHQMEIKRFIKEKEQDPYIHTSFESWPADPNKEWKELIPVYEAQGYCMADYRKKLGMPPVPNC.

2 helical membrane passes run 123–143 (LELL…FTAL) and 163–183 (MMIF…YVLV).

This sequence belongs to the asfivirus C257R family.

Its subcellular location is the host membrane. It is found in the virion. The protein is Transmembrane protein C257L of Ornithodoros (relapsing fever ticks).